The following is a 192-amino-acid chain: Holliday junction branch migration complex subunit RuvA (192 aa).

A domain I region spans residues 1 to 61 (MFEYLKGIVT…DTGITLYGFL (61 aa)). The interval 62–137 (SLEDKELFLK…KLGDYVKKST (76 aa)) is domain II. The interval 137 to 140 (TAAA) is flexible linker. The segment at 141-192 (DLTPSLQDALLALVALGYTQKEVDRITPKLAKLPENTADGYVKEALALLLKK) is domain III.

This sequence belongs to the RuvA family. As to quaternary structure, homotetramer. Forms an RuvA(8)-RuvB(12)-Holliday junction (HJ) complex. HJ DNA is sandwiched between 2 RuvA tetramers; dsDNA enters through RuvA and exits via RuvB. An RuvB hexamer assembles on each DNA strand where it exits the tetramer. Each RuvB hexamer is contacted by two RuvA subunits (via domain III) on 2 adjacent RuvB subunits; this complex drives branch migration. In the full resolvosome a probable DNA-RuvA(4)-RuvB(12)-RuvC(2) complex forms which resolves the HJ.

Its subcellular location is the cytoplasm. The RuvA-RuvB-RuvC complex processes Holliday junction (HJ) DNA during genetic recombination and DNA repair, while the RuvA-RuvB complex plays an important role in the rescue of blocked DNA replication forks via replication fork reversal (RFR). RuvA specifically binds to HJ cruciform DNA, conferring on it an open structure. The RuvB hexamer acts as an ATP-dependent pump, pulling dsDNA into and through the RuvAB complex. HJ branch migration allows RuvC to scan DNA until it finds its consensus sequence, where it cleaves and resolves the cruciform DNA. The chain is Holliday junction branch migration complex subunit RuvA from Lactobacillus johnsonii (strain CNCM I-12250 / La1 / NCC 533).